Consider the following 640-residue polypeptide: Chaperone protein DnaK (640 aa).

Thr199 carries the phosphothreonine; by autocatalysis modification. Positions Tyr603–Ser640 are disordered. A compositionally biased stretch (basic and acidic residues) spans Gln611–Glu621. Residues Glu622–Val632 are compositionally biased toward acidic residues.

This sequence belongs to the heat shock protein 70 family.

In terms of biological role, acts as a chaperone. The protein is Chaperone protein DnaK of Nitrosococcus oceani (strain ATCC 19707 / BCRC 17464 / JCM 30415 / NCIMB 11848 / C-107).